We begin with the raw amino-acid sequence, 983 residues long: Alanine--tRNA ligase, mitochondrial (983 aa).

A mitochondrion-targeting transit peptide spans 1–24 (MTSTTGLRNLTLSFKKQLTTSTRT). The residue at position 504 (serine 504) is a Phosphoserine. 4 residues coordinate Zn(2+): histidine 625, histidine 629, cysteine 744, and histidine 748. At serine 975 the chain carries Phosphoserine.

Belongs to the class-II aminoacyl-tRNA synthetase family. In terms of assembly, monomer. Requires Zn(2+) as cofactor.

The protein localises to the cytoplasm. The protein resides in the mitochondrion. The catalysed reaction is tRNA(Ala) + L-alanine + ATP = L-alanyl-tRNA(Ala) + AMP + diphosphate. Its function is as follows. Catalyzes the attachment of alanine to tRNA(Ala) in a two-step reaction: alanine is first activated by ATP to form Ala-AMP and then transferred to the acceptor end of tRNA(Ala). Also edits incorrectly charged tRNA(Ala) via its editing domain. This Saccharomyces cerevisiae (strain ATCC 204508 / S288c) (Baker's yeast) protein is Alanine--tRNA ligase, mitochondrial.